Reading from the N-terminus, the 77-residue chain is Tachyplesin-2 (77 aa).

Positions 1–23 (MKKLVIALCLMMVLAVMVEEAEA) are cleaved as a signal peptide. Intrachain disulfides connect C26/C39 and C30/C35. R40 is subject to Arginine amide. The propeptide occupies 41–77 (GKRNEVRQYRDRGYDVRAIPDETFFTRQDEDEDDDEE).

It belongs to the tachyplesin/polyphemusin family. As to expression, hemocytes.

The protein localises to the secreted. Its function is as follows. Significantly inhibits the growth of Gram-negative and Gram-positive bacteria. The sequence is that of Tachyplesin-2 from Tachypleus tridentatus (Japanese horseshoe crab).